Here is a 270-residue protein sequence, read N- to C-terminus: MISKINFVKMHGLGNDFVIVNKRDLSSSYDLSQLAKNMAERHTGIGCDQFIIYEEHNDFYEMIIYNIDGSSAKLCGNATRCLAKLIYLDTGKQDITVMVGNKKLLCNVNDENNISVNVGSVSFNEAWMPNRDKVWEFAERYMIDLKETICVDIGNPHVVIFSKLEPQDQKIVGERLQAKELFADGVNVNFAEVKDNKIYLSVWERGAGLTLACGSGACGSFAAGLKRGFIHSPSTIVFKHGNLTMKEENGNIIMQGAATLVARGEYYCEQ.

Substrate contacts are provided by N15, Q49, and N66. C75 acts as the Proton donor in catalysis. Substrate contacts are provided by residues 76–77 (GN), N155, N187, and 204–205 (ER). The active-site Proton acceptor is the C213. Residue 214–215 (GS) coordinates substrate.

It belongs to the diaminopimelate epimerase family. Homodimer.

Its subcellular location is the cytoplasm. The enzyme catalyses (2S,6S)-2,6-diaminopimelate = meso-2,6-diaminopimelate. Its pathway is amino-acid biosynthesis; L-lysine biosynthesis via DAP pathway; DL-2,6-diaminopimelate from LL-2,6-diaminopimelate: step 1/1. Functionally, catalyzes the stereoinversion of LL-2,6-diaminopimelate (L,L-DAP) to meso-diaminopimelate (meso-DAP), a precursor of L-lysine and an essential component of the bacterial peptidoglycan. This is Diaminopimelate epimerase from Rickettsia africae (strain ESF-5).